Consider the following 245-residue polypeptide: 3-deoxy-manno-octulosonate cytidylyltransferase (245 aa).

This sequence belongs to the KdsB family.

It localises to the cytoplasm. The catalysed reaction is 3-deoxy-alpha-D-manno-oct-2-ulosonate + CTP = CMP-3-deoxy-beta-D-manno-octulosonate + diphosphate. Its pathway is nucleotide-sugar biosynthesis; CMP-3-deoxy-D-manno-octulosonate biosynthesis; CMP-3-deoxy-D-manno-octulosonate from 3-deoxy-D-manno-octulosonate and CTP: step 1/1. The protein operates within bacterial outer membrane biogenesis; lipopolysaccharide biosynthesis. Functionally, activates KDO (a required 8-carbon sugar) for incorporation into bacterial lipopolysaccharide in Gram-negative bacteria. The sequence is that of 3-deoxy-manno-octulosonate cytidylyltransferase from Acaryochloris marina (strain MBIC 11017).